The primary structure comprises 147 residues: Myoglobin (147 aa).

A2 bears the N-acetylalanine mark. The Globin domain occupies 2-141 (ADFDAVLKCW…IIADLEANYK (140 aa)). H60 contributes to the nitrite binding site. H60 lines the O2 pocket. Residue H89 coordinates heme b.

This sequence belongs to the globin family. In terms of assembly, monomeric.

The protein localises to the cytoplasm. It localises to the sarcoplasm. It carries out the reaction Fe(III)-heme b-[protein] + nitric oxide + H2O = Fe(II)-heme b-[protein] + nitrite + 2 H(+). The catalysed reaction is H2O2 + AH2 = A + 2 H2O. In terms of biological role, monomeric heme protein which primary function is to store oxygen and facilitate its diffusion within muscle tissues. Reversibly binds oxygen through a pentacoordinated heme iron and enables its timely and efficient release as needed during periods of heightened demand. Depending on the oxidative conditions of tissues and cells, and in addition to its ability to bind oxygen, it also has a nitrite reductase activity whereby it regulates the production of bioactive nitric oxide. Under stress conditions, like hypoxia and anoxia, it also protects cells against reactive oxygen species thanks to its pseudoperoxidase activity. In Thunnus albacares (Yellowfin tuna), this protein is Myoglobin (mb).